Reading from the N-terminus, the 398-residue chain is 8-amino-7-oxononanoate synthase (398 aa).

Position 23 (Arg23) interacts with substrate. 110 to 111 contributes to the pyridoxal 5'-phosphate binding site; the sequence is GY. His135 serves as a coordination point for substrate. Positions 181, 209, and 237 each coordinate pyridoxal 5'-phosphate. The residue at position 240 (Lys240) is an N6-(pyridoxal phosphate)lysine. Substrate is bound at residue Thr354.

It belongs to the class-II pyridoxal-phosphate-dependent aminotransferase family. BioF subfamily. Homodimer. Pyridoxal 5'-phosphate serves as cofactor.

It catalyses the reaction 6-carboxyhexanoyl-[ACP] + L-alanine + H(+) = (8S)-8-amino-7-oxononanoate + holo-[ACP] + CO2. The protein operates within cofactor biosynthesis; biotin biosynthesis. In terms of biological role, catalyzes the decarboxylative condensation of pimeloyl-[acyl-carrier protein] and L-alanine to produce 8-amino-7-oxononanoate (AON), [acyl-carrier protein], and carbon dioxide. The chain is 8-amino-7-oxononanoate synthase from Anaeromyxobacter sp. (strain K).